Consider the following 205-residue polypeptide: uncharacterized protein (205 aa).

This sequence to M.jannaschii MJ0638 and MJ1252 and M.tuberculosis Rv2003c.

This is an uncharacterized protein from Methanocaldococcus jannaschii (strain ATCC 43067 / DSM 2661 / JAL-1 / JCM 10045 / NBRC 100440) (Methanococcus jannaschii).